A 1097-amino-acid chain; its full sequence is DNA-directed RNA polymerase subunit beta (1097 aa).

The disordered stretch occupies residues 1071 to 1097; it reads MQDVNPKRNTPSRPTYESLGTSEYAED. Residues 1077–1091 are compositionally biased toward polar residues; sequence KRNTPSRPTYESLGT.

It belongs to the RNA polymerase beta chain family. In cyanobacteria the RNAP catalytic core is composed of 2 alpha, 1 beta, 1 beta', 1 gamma and 1 omega subunit. When a sigma factor is associated with the core the holoenzyme is formed, which can initiate transcription.

It carries out the reaction RNA(n) + a ribonucleoside 5'-triphosphate = RNA(n+1) + diphosphate. Functionally, DNA-dependent RNA polymerase catalyzes the transcription of DNA into RNA using the four ribonucleoside triphosphates as substrates. This Prochlorococcus marinus subsp. pastoris (strain CCMP1986 / NIES-2087 / MED4) protein is DNA-directed RNA polymerase subunit beta.